The sequence spans 555 residues: Formate--tetrahydrofolate ligase (555 aa).

65–72 (TPAGEGKS) contacts ATP.

It belongs to the formate--tetrahydrofolate ligase family.

The catalysed reaction is (6S)-5,6,7,8-tetrahydrofolate + formate + ATP = (6R)-10-formyltetrahydrofolate + ADP + phosphate. Its pathway is one-carbon metabolism; tetrahydrofolate interconversion. This chain is Formate--tetrahydrofolate ligase, found in Staphylococcus aureus (strain USA300).